Here is a 72-residue protein sequence, read N- to C-terminus: Cytochrome b-c1 complex subunit 8-2, mitochondrial (72 aa).

Residues 1-41 (MGKQPVKLKAVVYALSPFQQKIMTGLWKDLPEKIHHKVSEN) are Mitochondrial matrix-facing. The chain crosses the membrane as a helical span at residues 42-58 (WISTILLVAPVVGTYSY). At 59–72 (AQYFKEQEKLEHRF) the chain is on the mitochondrial intermembrane side.

It belongs to the UQCRQ/QCR8 family. As to quaternary structure, component of the ubiquinol-cytochrome c oxidoreductase (cytochrome b-c1 complex, complex III, CIII), a multisubunit enzyme composed of 10 subunits. The complex is composed of 3 respiratory subunits cytochrome b (MT-CYB), cytochrome c1 (CYC1-1 or CYC1-2) and Rieske protein (UCR1-1 or UCR1-2), 2 core protein subunits MPPalpha1 (or MPPalpha2) and MPPB, and 5 low-molecular weight protein subunits QCR7-1 (or QCR7-2), UCRQ-1 (or UCRQ-2), QCR9, UCRY and probably QCR6-1 (or QCR6-2). The complex exists as an obligatory dimer and forms supercomplexes (SCs) in the inner mitochondrial membrane with NADH-ubiquinone oxidoreductase (complex I, CI), resulting in different assemblies (supercomplexes SCI(1)III(2) and SCI(2)III(4)).

The protein resides in the mitochondrion inner membrane. In terms of biological role, component of the ubiquinol-cytochrome c oxidoreductase, a multisubunit transmembrane complex that is part of the mitochondrial electron transport chain which drives oxidative phosphorylation. The respiratory chain contains 3 multisubunit complexes succinate dehydrogenase (complex II, CII), ubiquinol-cytochrome c oxidoreductase (cytochrome b-c1 complex, complex III, CIII) and cytochrome c oxidase (complex IV, CIV), that cooperate to transfer electrons derived from NADH and succinate to molecular oxygen, creating an electrochemical gradient over the inner membrane that drives transmembrane transport and the ATP synthase. The cytochrome b-c1 complex catalyzes electron transfer from ubiquinol to cytochrome c, linking this redox reaction to translocation of protons across the mitochondrial inner membrane, with protons being carried across the membrane as hydrogens on the quinol. In the process called Q cycle, 2 protons are consumed from the matrix, 4 protons are released into the intermembrane space and 2 electrons are passed to cytochrome c. This is Cytochrome b-c1 complex subunit 8-2, mitochondrial (UCRQ-2) from Arabidopsis thaliana (Mouse-ear cress).